A 119-amino-acid chain; its full sequence is Putative ankyrin repeat domain-containing protein 26-like 1 (119 aa).

Residues 15 to 112 are a coiled coil; the sequence is EKEEDLLHKN…EKQSRQRLTK (98 aa).

The chain is Putative ankyrin repeat domain-containing protein 26-like 1 (ANKRD36BP1) from Homo sapiens (Human).